A 317-amino-acid polypeptide reads, in one-letter code: Acetyl-coenzyme A carboxylase carboxyl transferase subunit beta (317 aa).

Positions 1–28 are disordered; that stretch reads MANNMTDTMTKPDINNDSTSLQQNGNKA. Residues 55–317 enclose the CoA carboxyltransferase N-terminal domain; the sequence is PSTKCSSCHS…LCSVPNVDVQ (263 aa). Zn(2+)-binding residues include C59, C62, C78, and C81. The C4-type zinc finger occupies 59-81; it reads CSSCHSIITNTALIFNCYVCPHC.

The protein belongs to the AccD/PCCB family. Acetyl-CoA carboxylase is a heterohexamer composed of biotin carboxyl carrier protein (AccB), biotin carboxylase (AccC) and two subunits each of ACCase subunit alpha (AccA) and ACCase subunit beta (AccD). The cofactor is Zn(2+).

It is found in the cytoplasm. The catalysed reaction is N(6)-carboxybiotinyl-L-lysyl-[protein] + acetyl-CoA = N(6)-biotinyl-L-lysyl-[protein] + malonyl-CoA. It functions in the pathway lipid metabolism; malonyl-CoA biosynthesis; malonyl-CoA from acetyl-CoA: step 1/1. In terms of biological role, component of the acetyl coenzyme A carboxylase (ACC) complex. Biotin carboxylase (BC) catalyzes the carboxylation of biotin on its carrier protein (BCCP) and then the CO(2) group is transferred by the transcarboxylase to acetyl-CoA to form malonyl-CoA. The chain is Acetyl-coenzyme A carboxylase carboxyl transferase subunit beta from Psychrobacter cryohalolentis (strain ATCC BAA-1226 / DSM 17306 / VKM B-2378 / K5).